The following is a 70-amino-acid chain: UPF0352 protein PSHAa1818 (70 aa).

It belongs to the UPF0352 family.

This is UPF0352 protein PSHAa1818 from Pseudoalteromonas translucida (strain TAC 125).